Reading from the N-terminus, the 249-residue chain is Large ribosomal subunit protein uL4 (249 aa).

Belongs to the universal ribosomal protein uL4 family. In terms of assembly, part of the 50S ribosomal subunit.

Functionally, one of the primary rRNA binding proteins, this protein initially binds near the 5'-end of the 23S rRNA. It is important during the early stages of 50S assembly. It makes multiple contacts with different domains of the 23S rRNA in the assembled 50S subunit and ribosome. Its function is as follows. Forms part of the polypeptide exit tunnel. The chain is Large ribosomal subunit protein uL4 from Methanoculleus marisnigri (strain ATCC 35101 / DSM 1498 / JR1).